A 284-amino-acid polypeptide reads, in one-letter code: Transmembrane protein 163b (284 aa).

A disordered region spans residues 1–44 (MTDSSSASDPTAGPVDPGPAPSAPDPALEDPASTPANGHHPNQA). Residues 1–83 (MTDSSSASDP…HEAQSYRKKA (83 aa)) lie on the Cytoplasmic side of the membrane. Residues 84 to 104 (LWVSWVSIVVTMILAIAAFTV) traverse the membrane as a helical segment. Topologically, residues 105 to 111 (SIMRHSA) are extracellular. A helical transmembrane segment spans residues 112-132 (SAFGFAFDATLDVLSSIIVLW). Over 133–145 (RYSNAAAVHSAHR) the chain is Cytoplasmic. Residues 146–166 (EYIACVILGVVFILSAITILV) form a helical membrane-spanning segment. The Extracellular portion of the chain corresponds to 167-182 (KAIHDLATKLEPEVDD). The helical transmembrane segment at 183–203 (FLYSVSVISGVVCTVLCVCKF) threads the bilayer. The Cytoplasmic segment spans residues 204–212 (MLGKVLTSR). The chain crosses the membrane as a helical span at residues 213–233 (ALITDGFNSLVGGVMGFSILI). Topologically, residues 234-243 (SAEVFKHEPS) are extracellular. Residues 244 to 264 (VWFLDGTIGILIGLIILAYGV) form a helical membrane-spanning segment. Residues 265–284 (KLLKDMVPRIRQTRHYERFE) are Cytoplasmic-facing.

This sequence belongs to the TMEM163 family.

The protein resides in the cytoplasmic vesicle. It is found in the secretory vesicle. The protein localises to the synaptic vesicle membrane. It localises to the early endosome membrane. Its subcellular location is the late endosome membrane. The protein resides in the lysosome membrane. It is found in the cell membrane. It carries out the reaction Zn(2+)(in) = Zn(2+)(out). Zinc ion transporter that mediates zinc efflux and plays a crucial role in intracellular zinc homeostasis. Binds the divalent cations Zn(2+), Ni(2+), and to a minor extent Cu(2+). Is a functional modulator of P2X purinoceptors, including P2RX1, P2RX3, P2RX4 and P2RX7. Plays a role in central nervous system development and is required for myelination, and survival and proliferation of oligodendrocytes. The polypeptide is Transmembrane protein 163b (Danio rerio (Zebrafish)).